The sequence spans 218 residues: Adenylate kinase (218 aa).

10-15 contacts ATP; it reads GAGKGT. Residues 30-59 form an NMP region; sequence STGDMLRAAVKEETPLGRKAKEVMDSGNLV. AMP-binding positions include T31, R36, 57–59, 85–88, and Q92; these read NLV and GFPR. The segment at 122–159 is LID; the sequence is GRRVHPASGRTYHLTFNPPQQQGVDDETGEPLIQRVDD. ATP-binding positions include R123 and 132 to 133; that span reads TY. AMP contacts are provided by R156 and R167. G203 is a binding site for ATP.

This sequence belongs to the adenylate kinase family. Monomer.

The protein localises to the cytoplasm. It catalyses the reaction AMP + ATP = 2 ADP. It functions in the pathway purine metabolism; AMP biosynthesis via salvage pathway; AMP from ADP: step 1/1. Its function is as follows. Catalyzes the reversible transfer of the terminal phosphate group between ATP and AMP. Plays an important role in cellular energy homeostasis and in adenine nucleotide metabolism. This Chlorobium phaeovibrioides (strain DSM 265 / 1930) (Prosthecochloris vibrioformis (strain DSM 265)) protein is Adenylate kinase.